We begin with the raw amino-acid sequence, 330 residues long: Olfactory receptor 11H6 (330 aa).

Over 1–43 (MFFIIHSLVTSVFLTALGPQNRTMHFVTEFVLLGFHGQREMQS) the chain is Extracellular. Asparagine 21 is a glycosylation site (N-linked (GlcNAc...) asparagine). The chain crosses the membrane as a helical span at residues 44–64 (CFFSFILVLYLLTLLGNGAIV). At 65–72 (CAVKLDRR) the chain is on the cytoplasmic side. The helical transmembrane segment at 73–93 (LHTPMYILLGNFAFLEIWYIS) threads the bilayer. Residues 94-117 (STVPNMLVNILSEIKTISFSGCFL) lie on the Extracellular side of the membrane. An intrachain disulfide couples cysteine 115 to cysteine 207. The helical transmembrane segment at 118–138 (QFYFFFSLGTTECFFLSVMAY) threads the bilayer. The Cytoplasmic segment spans residues 139 to 157 (DRYLAICRPLHYPSIMTGK). The helical transmembrane segment at 158 to 178 (FCIILVCVCWVGGFLCYPVPI) threads the bilayer. Residues 179 to 215 (VLISQLPFCGPNIIDHLVCDPGPLFALACISAPSTEL) are Extracellular-facing. Residues 216–235 (ICYTFNSMIIFGPFLSILGS) traverse the membrane as a helical segment. The Cytoplasmic portion of the chain corresponds to 236–255 (YTLVIRAVLCIPSGAGRTKA). The helical transmembrane segment at 256 to 276 (FSTCGSHLMVVSLFYGTLMVM) threads the bilayer. Over 277–289 (YVSPTSGNPAGMQ) the chain is Extracellular. The chain crosses the membrane as a helical span at residues 290–310 (KIITLVYTAMTPFLNPLIYSL). Over 311-330 (RNKDMKDALKRVLGLTVSQN) the chain is Cytoplasmic.

It belongs to the G-protein coupled receptor 1 family.

The protein resides in the cell membrane. Its function is as follows. Odorant receptor. This chain is Olfactory receptor 11H6 (OR11H6), found in Homo sapiens (Human).